A 361-amino-acid polypeptide reads, in one-letter code: G-protein coupled receptor 68 (361 aa).

The Extracellular portion of the chain corresponds to Met1 to Asn12. 2 N-linked (GlcNAc...) asparagine glycosylation sites follow: Asn3 and Asn8. A helical membrane pass occupies residues Cys13–Gln49. 2 cysteine pairs are disulfide-bonded: Cys13/Cys258 and Cys94/Cys172. The Cytoplasmic segment spans residues Ile50–Arg53. The chain crosses the membrane as a helical span at residues Asn54–His84. Residues Asp85–His89 lie on the Extracellular side of the membrane. Residues Asp90–His125 form a helical membrane-spanning segment. Residues Pro126 to Arg133 are Cytoplasmic-facing. The chain crosses the membrane as a helical span at residues Thr134–Glu160. Residues Glu161–Tyr176 lie on the Extracellular side of the membrane. Residues Glu161–Tyr176 are extracellular loop 2 (ECL2). Residues Pro177–Arg214 form a helical membrane-spanning segment. Residues Ser215–Thr218 are Cytoplasmic-facing. Residues Gln219–Trp254 form a helical membrane-spanning segment. Over Glu255 to Phe260 the chain is Extracellular. The chain crosses the membrane as a helical span at residues Ala261–Val289. Residues Ser290–Ser361 are Cytoplasmic-facing. The interval Leu340–Ser361 is disordered. A compositionally biased stretch (gly residues) spans Gly351 to Ser361.

This sequence belongs to the G-protein coupled receptor 1 family.

The protein resides in the cell membrane. With respect to regulation, activated by a network of residues that connects an extracellular-facing cavity to Glu-149, a conserved charged residue buried in the transmembrane core of the receptor. Protonation likely drives conformational changes in extracellular loop 2 (ECL2), which stabilizes movement of transmembrane 3 (TM3) and a series of rearrangements that connect the extracellular-facing cavity to Glu-149, a residue only conserved in proton-sensing G-protein coupled receptors. Activated in an allosteric manner by divalent metal ions at the extracellular surface following the order: Cd(2+) &gt; Co(2+) &gt; Ni(2+) &gt; Zn(2+) &gt; Fe(2+) &gt; Ca(2+) &gt; Mg(2+). Functionally, proton-sensing G-protein coupled receptor activated by extracellular pH, which is required to monitor pH changes and generate adaptive reactions. The receptor is almost silent at pH 7.8 but fully activated at pH 6.8. Ligand binding causes a conformation change that triggers signaling via guanine nucleotide-binding proteins (G proteins) and modulates the activity of downstream effectors, such as phospholipase C. GPR68 is mainly coupled to G(q) G proteins and mediates production of diacylglycerol (DAG) and inositol 1,4,5-trisphosphate (IP3). Acts as a key mechanosensor of fluid shear stress and membrane stretch. Expressed in endothelial cells of small-diameter resistance arteries, where it mediates flow-induced dilation in response to shear stress. May represents an osteoblastic pH sensor regulating cell-mediated responses to acidosis in bone. Acts as a regulator of calcium-sensing receptor CASR in a seesaw manner: GPR68-mediated signaling inhibits CASR signaling in response to protons, while CASR inhibits GPR68 in presence of extracellular calcium. The chain is G-protein coupled receptor 68 (GPR68) from Bos taurus (Bovine).